Reading from the N-terminus, the 258-residue chain is Acyl-[acyl-carrier-protein]--UDP-N-acetylglucosamine O-acyltransferase (258 aa).

The protein belongs to the transferase hexapeptide repeat family. LpxA subfamily. In terms of assembly, homotrimer.

The protein resides in the cytoplasm. The catalysed reaction is a (3R)-hydroxyacyl-[ACP] + UDP-N-acetyl-alpha-D-glucosamine = a UDP-3-O-[(3R)-3-hydroxyacyl]-N-acetyl-alpha-D-glucosamine + holo-[ACP]. Its pathway is glycolipid biosynthesis; lipid IV(A) biosynthesis; lipid IV(A) from (3R)-3-hydroxytetradecanoyl-[acyl-carrier-protein] and UDP-N-acetyl-alpha-D-glucosamine: step 1/6. Its function is as follows. Involved in the biosynthesis of lipid A, a phosphorylated glycolipid that anchors the lipopolysaccharide to the outer membrane of the cell. This is Acyl-[acyl-carrier-protein]--UDP-N-acetylglucosamine O-acyltransferase from Ectopseudomonas mendocina (strain ymp) (Pseudomonas mendocina).